The following is a 130-amino-acid chain: Protein YchQ (130 aa).

Residues methionine 1–serine 9 are Periplasmic-facing. The helical transmembrane segment at valine 10 to leucine 28 threads the bilayer. Over arginine 29–arginine 39 the chain is Cytoplasmic. Residues tryptophan 40–leucine 59 form a helical membrane-spanning segment. The Periplasmic portion of the chain corresponds to methionine 60 to glutamine 73. Residues tryptophan 74–leucine 93 form a helical membrane-spanning segment. Residues aspartate 94–arginine 104 are Cytoplasmic-facing. Residues isoleucine 105–threonine 124 traverse the membrane as a helical segment. At lysine 125 to glycine 130 the chain is on the periplasmic side.

This sequence belongs to the SirB2 family.

The protein localises to the cell inner membrane. In Escherichia coli (strain K12), this protein is Protein YchQ (ychQ).